Consider the following 306-residue polypeptide: Methionyl-tRNA formyltransferase (306 aa).

109–112 (SILP) lines the (6S)-5,6,7,8-tetrahydrofolate pocket.

Belongs to the Fmt family.

The catalysed reaction is L-methionyl-tRNA(fMet) + (6R)-10-formyltetrahydrofolate = N-formyl-L-methionyl-tRNA(fMet) + (6S)-5,6,7,8-tetrahydrofolate + H(+). Its function is as follows. Attaches a formyl group to the free amino group of methionyl-tRNA(fMet). The formyl group appears to play a dual role in the initiator identity of N-formylmethionyl-tRNA by promoting its recognition by IF2 and preventing the misappropriation of this tRNA by the elongation apparatus. The chain is Methionyl-tRNA formyltransferase from Sphingopyxis alaskensis (strain DSM 13593 / LMG 18877 / RB2256) (Sphingomonas alaskensis).